Reading from the N-terminus, the 418-residue chain is Aminodeoxyfutalosine deaminase (418 aa).

Histidine 97 and histidine 99 together coordinate Zn(2+). Positions 173 and 211 each coordinate substrate. Histidine 238 lines the Zn(2+) pocket. Glutamate 241 functions as the Proton donor in the catalytic mechanism. Position 352 (aspartate 352) interacts with Zn(2+).

The protein belongs to the metallo-dependent hydrolases superfamily. It depends on Zn(2+) as a cofactor.

It carries out the reaction 6-amino-6-deoxyfutalosine + H2O + H(+) = futalosine + NH4(+). The protein operates within quinol/quinone metabolism; menaquinone biosynthesis. Catalyzes the deamination of aminodeoxyfutalosine (AFL) into futalosine (FL). To a lesser extent, can also deaminate 5'-deoxyadenosine, 5'-methylthioadenosine, 2'-deoxyadenosine, adenosine, 1-(6-amino-9H-purin-9-yl)-1-deoxy-N-ethyl-beta-D-ribofuranuronamide (NECA), and S-adenosylhomocysteine. This is Aminodeoxyfutalosine deaminase from Deinococcus radiodurans (strain ATCC 13939 / DSM 20539 / JCM 16871 / CCUG 27074 / LMG 4051 / NBRC 15346 / NCIMB 9279 / VKM B-1422 / R1).